Here is a 222-residue protein sequence, read N- to C-terminus: 25 kDa elongation factor 1-beta (222 aa).

The segment covering 75 to 94 (TSASAPAKQAPKKAASAPAK) has biased composition (low complexity). Residues 75–98 (TSASAPAKQAPKKAASAPAKQADE) are disordered.

The protein belongs to the EF-1-beta/EF-1-delta family. EF-1 is composed of 4 subunits: alpha, beta, delta, and gamma.

EF-1-beta and EF-1-delta stimulate the exchange of GDP bound to EF-1-alpha to GTP. The protein is 25 kDa elongation factor 1-beta of Trypanosoma cruzi.